A 293-amino-acid chain; its full sequence is Adenylyl-sulfate kinase 2, chloroplastic (293 aa).

Residues 1-59 (MEGLAIRASRPSVFCSIPGLGGDSHRKPPSDGFLKLPASSIPADSRKLVANSTSFHPIS) constitute a chloroplast transit peptide. 122 to 130 (GLSGSGKST) is a binding site for ATP. Residues Asp-152, Arg-155, Arg-169, Asn-172, 195-196 (IS), and Gly-245 contribute to the substrate site. Ser-196 serves as the catalytic Phosphoserine intermediate.

It belongs to the APS kinase family. As to quaternary structure, interacts with APK1. Expressed in root vasculature, root tips, leaf epidermal cells and funiculus of developing seeds.

It localises to the plastid. It is found in the chloroplast. The enzyme catalyses adenosine 5'-phosphosulfate + ATP = 3'-phosphoadenylyl sulfate + ADP + H(+). Its pathway is sulfur metabolism; hydrogen sulfide biosynthesis; sulfite from sulfate: step 2/3. Its function is as follows. Catalyzes the synthesis of activated sulfate. Essential for plant reproduction and viability. Required for the production of glucosinolates. The chain is Adenylyl-sulfate kinase 2, chloroplastic (APK2) from Arabidopsis thaliana (Mouse-ear cress).